A 354-amino-acid chain; its full sequence is Ornithine transcarbamylase, mitochondrial (354 aa).

The N-terminal 32 residues, 1 to 32, are a transit peptide targeting the mitochondrion; sequence MLFNLKNLYRITKLTQNSKHLPRHFCRGPPNQ. Carbamoyl phosphate-binding positions include 90-94, arginine 141, and histidine 168; that span reads STRTR. Residue arginine 141 coordinates L-ornithine. L-ornithine contacts are provided by residues asparagine 199, 263–267, 302–305, and arginine 330; these read DTWIS and HCLP. Residue cysteine 303 is part of the active site. Arginine 330 serves as a coordination point for carbamoyl phosphate.

It belongs to the aspartate/ornithine carbamoyltransferase superfamily. OTCase family. Homotrimer. Post-translationally, cleavage of the precursor form to the active form occurs only in the kidney. In terms of tissue distribution, expressed in kidney, brain, heart, liver, pancreas, gizzard, small intestine and breast muscle. More abundant in mitochondrion-rich organs (heart, liver and brain) than in other organs. Activity is only detected in the kidney.

The protein localises to the mitochondrion matrix. It carries out the reaction carbamoyl phosphate + L-ornithine = L-citrulline + phosphate + H(+). It participates in nitrogen metabolism; urea cycle; L-citrulline from L-ornithine and carbamoyl phosphate: step 1/1. With respect to regulation, inhibition by ornithine increases at higher pH. Its function is as follows. Catalyzes the second step of the urea cycle, the condensation of carbamoyl phosphate with L-ornithine to form L-citrulline. The urea cycle ensures the detoxification of ammonia by converting it to urea for excretion. The protein is Ornithine transcarbamylase, mitochondrial of Gallus gallus (Chicken).